The chain runs to 409 residues: Glycosaminoglycan xylosylkinase (409 aa).

Over 1 to 6 the chain is Cytoplasmic; sequence MKLKQR. A helical; Signal-anchor for type II membrane protein transmembrane segment spans residues 7-25; the sequence is VVVLCAVLFLLGLAKVFLL. Residues 26–409 are Lumenal-facing; it reads DGGEGSAASR…IEDRMNLPHP (384 aa). ATP is bound by residues Q107 and K123. D142 lines the Mn(2+) pocket. N193 carries an N-linked (GlcNAc...) asparagine glycan. Intrachain disulfides connect C196–C211 and C201–C204. 222–225 contacts ATP; the sequence is TLWL. Cystine bridges form between C257/C331 and C332/C389. D289 is an active-site residue. Residues E294 and D309 each contribute to the ATP site. D309 serves as a coordination point for Mn(2+).

The protein belongs to the FAM20 family. Requires Mn(2+) as cofactor.

The protein localises to the golgi apparatus membrane. The enzyme catalyses 3-O-(beta-D-galactosyl-(1-&gt;3)-beta-D-galactosyl-(1-&gt;4)-beta-D-xylosyl)-L-seryl-[protein] + ATP = 3-O-(beta-D-galactosyl-(1-&gt;3)-beta-D-galactosyl-(1-&gt;4)-beta-D-2-O-phosphoxylosyl)-L-seryl-[protein] + ADP + H(+). Responsible for the 2-O-phosphorylation of xylose in the glycosaminoglycan-protein linkage region of proteoglycans thereby regulating the amount of mature GAG chains. Sulfated glycosaminoglycans (GAGs), including heparan sulfate and chondroitin sulfate, are synthesized on the so-called common GAG-protein linkage region (GlcUAbeta1-3Galbeta1-3Galbeta1-4Xylbeta1-O-Ser) of core proteins, which is formed by the stepwise addition of monosaccharide residues by the respective specific glycosyltransferases. In Danio rerio (Zebrafish), this protein is Glycosaminoglycan xylosylkinase.